A 266-amino-acid chain; its full sequence is Putative hydro-lyase Jann_2570 (266 aa).

It belongs to the D-glutamate cyclase family.

The polypeptide is Putative hydro-lyase Jann_2570 (Jannaschia sp. (strain CCS1)).